The following is a 276-amino-acid chain: Apulose-4-phosphate transketolase subunit A (276 aa).

It belongs to the transketolase family. In terms of assembly, probable heterodimer composed of AptA and AptB. Thiamine diphosphate is required as a cofactor.

It catalyses the reaction apulose 4-phosphate + D-glyceraldehyde 3-phosphate = D-xylulose 5-phosphate + dihydroxyacetone phosphate. It functions in the pathway carbohydrate metabolism. Functionally, involved in catabolism of D-apiose. Catalyzes the transfer of the glycolaldehyde group from apulose-4-phosphate to D-glyceraldehyde 3-phosphate, generating dihydroxyacetone phosphate and D-xylulose-5-phosphate. The protein is Apulose-4-phosphate transketolase subunit A of Actinobacillus succinogenes (strain ATCC 55618 / DSM 22257 / CCUG 43843 / 130Z).